Reading from the N-terminus, the 685-residue chain is MIDRYKHQQLRIGSVSPQQISAWAKKILPNGETVGEVTKPYTFHYKTNKPEKDGLFCERIFGPIKSGICACGNYRVIGNQKEGPKFCEQCGVEFVDSRIRRYQMGYIRLACPVTHVWYLKRLPSYIANLLDKPLKELEGLVYCDFSFARPIAKKPTFLRLRGSFEYEIQSWKYSIPLFFTTQGFDTFRSREISTGAGAIREQLADLDLRILIDYSVVEWKELGEEGLTGNEWEDRKIGRRKDFLVRRMELAKHFIRTNIEPEWMVLCLLPVLPPELRPIIQIDGGKLMSSDINELYRRVIYRNNTLTDLLTTSRSTPGELVMCQEKLVQEAVDTLLDNGIRGQPMRDGHNKVYKSFSDVIEGKEGRFRETLLGKRVDYSGRSVIVVGPSLSLHRCGLPREIAIELFQTFVIRGLIRQHLAPNIGVAKSKIREKGPIVWEILQEVMRGHPVLLNRAPTLHRLGIQAFQPILVEGRAICLHPLVCKGFNADFDGDQMAVHVPLSLEAQAEARLLMFSHMNLLSPAIGDPISVPTQDMLIGLYVLTSGNRRGICANRYNPWNRKSYQNERIDDNNYKSTREPFFCNSYDAIGAYRQKRINLDSPLWLRWQLEQCVIASREAPIEVHYESSGTYHEIYGHYLIVRSLKKKILCIYIRTTVGHISLYREIEEAIQGFFRAYSYDTQSYGI.

Residues C69, C71, C87, and C90 each coordinate Zn(2+). Mg(2+)-binding residues include D489, D491, and D493.

This sequence belongs to the RNA polymerase beta' chain family. RpoC1 subfamily. As to quaternary structure, in plastids the minimal PEP RNA polymerase catalytic core is composed of four subunits: alpha, beta, beta', and beta''. When a (nuclear-encoded) sigma factor is associated with the core the holoenzyme is formed, which can initiate transcription. Requires Mg(2+) as cofactor. Zn(2+) is required as a cofactor.

It is found in the plastid. Its subcellular location is the chloroplast. The catalysed reaction is RNA(n) + a ribonucleoside 5'-triphosphate = RNA(n+1) + diphosphate. Functionally, DNA-dependent RNA polymerase catalyzes the transcription of DNA into RNA using the four ribonucleoside triphosphates as substrates. The chain is DNA-directed RNA polymerase subunit beta' from Gossypium hirsutum (Upland cotton).